Here is a 104-residue protein sequence, read N- to C-terminus: Urease subunit beta (104 aa).

This sequence belongs to the urease beta subunit family. In terms of assembly, heterotrimer of UreA (gamma), UreB (beta) and UreC (alpha) subunits. Three heterotrimers associate to form the active enzyme.

It localises to the cytoplasm. It carries out the reaction urea + 2 H2O + H(+) = hydrogencarbonate + 2 NH4(+). The protein operates within nitrogen metabolism; urea degradation; CO(2) and NH(3) from urea (urease route): step 1/1. In Mycolicibacterium vanbaalenii (strain DSM 7251 / JCM 13017 / BCRC 16820 / KCTC 9966 / NRRL B-24157 / PYR-1) (Mycobacterium vanbaalenii), this protein is Urease subunit beta.